The following is a 660-amino-acid chain: Probable rhamnogalacturonate lyase B (660 aa).

An N-terminal signal peptide occupies residues 1–20 (MRLSVSLGLASLWTAIGATA). N-linked (GlcNAc...) asparagine glycans are attached at residues N22, N27, N109, N142, N238, N284, N432, N492, N532, N594, and N635.

This sequence belongs to the polysaccharide lyase 4 family.

It localises to the secreted. The enzyme catalyses Endotype eliminative cleavage of L-alpha-rhamnopyranosyl-(1-&gt;4)-alpha-D-galactopyranosyluronic acid bonds of rhamnogalacturonan I domains in ramified hairy regions of pectin leaving L-rhamnopyranose at the reducing end and 4-deoxy-4,5-unsaturated D-galactopyranosyluronic acid at the non-reducing end.. In terms of biological role, pectinolytic enzymes consist of four classes of enzymes: pectin lyase, polygalacturonase, pectin methylesterase and rhamnogalacturonase. Degrades the rhamnogalacturonan I (RG-I) backbone of pectin. The sequence is that of Probable rhamnogalacturonate lyase B (rglB) from Aspergillus terreus (strain NIH 2624 / FGSC A1156).